A 319-amino-acid polypeptide reads, in one-letter code: tRNA U34 carboxymethyltransferase (319 aa).

Residues Lys-88, Trp-102, Lys-107, Gly-126, 176–177, Met-192, Tyr-196, and Arg-311 contribute to the carboxy-S-adenosyl-L-methionine site; that span reads LE.

The protein belongs to the class I-like SAM-binding methyltransferase superfamily. CmoB family. Homotetramer.

The enzyme catalyses carboxy-S-adenosyl-L-methionine + 5-hydroxyuridine(34) in tRNA = 5-carboxymethoxyuridine(34) in tRNA + S-adenosyl-L-homocysteine + H(+). Functionally, catalyzes carboxymethyl transfer from carboxy-S-adenosyl-L-methionine (Cx-SAM) to 5-hydroxyuridine (ho5U) to form 5-carboxymethoxyuridine (cmo5U) at position 34 in tRNAs. The polypeptide is tRNA U34 carboxymethyltransferase (Azotobacter vinelandii (strain DJ / ATCC BAA-1303)).